We begin with the raw amino-acid sequence, 199 residues long: Probable GTP-binding protein EngB (199 aa).

The 172-residue stretch at 28 to 199 folds into the EngB-type G domain; the sequence is DLPEIALAGR…DSWDAILEQV (172 aa). Residues 36 to 43, 63 to 67, 81 to 84, 148 to 151, and 180 to 182 each bind GTP; these read GRSNVGKS, GKTQL, DVPG, TKAD, and FSS. Mg(2+)-binding residues include Ser-43 and Thr-65.

Belongs to the TRAFAC class TrmE-Era-EngA-EngB-Septin-like GTPase superfamily. EngB GTPase family. Mg(2+) serves as cofactor.

Its function is as follows. Necessary for normal cell division and for the maintenance of normal septation. The protein is Probable GTP-binding protein EngB of Streptococcus pyogenes serotype M28 (strain MGAS6180).